The primary structure comprises 166 residues: NAD(P)H-quinone oxidoreductase subunit I, chloroplastic (166 aa).

2 consecutive 4Fe-4S ferredoxin-type domains span residues 55-84 and 95-124; these read GRIHFEFDKCIACEVCVRVCPIDLPVVDWK and LNYSIDFGICIFCGNCVEYCPTNCLSMTEE. Residues C64, C67, C70, C74, C104, C107, C110, and C114 each contribute to the [4Fe-4S] cluster site.

This sequence belongs to the complex I 23 kDa subunit family. NDH is composed of at least 16 different subunits, 5 of which are encoded in the nucleus. [4Fe-4S] cluster is required as a cofactor.

It localises to the plastid. The protein resides in the chloroplast thylakoid membrane. The catalysed reaction is a plastoquinone + NADH + (n+1) H(+)(in) = a plastoquinol + NAD(+) + n H(+)(out). It carries out the reaction a plastoquinone + NADPH + (n+1) H(+)(in) = a plastoquinol + NADP(+) + n H(+)(out). Its function is as follows. NDH shuttles electrons from NAD(P)H:plastoquinone, via FMN and iron-sulfur (Fe-S) centers, to quinones in the photosynthetic chain and possibly in a chloroplast respiratory chain. The immediate electron acceptor for the enzyme in this species is believed to be plastoquinone. Couples the redox reaction to proton translocation, and thus conserves the redox energy in a proton gradient. The polypeptide is NAD(P)H-quinone oxidoreductase subunit I, chloroplastic (Tridax balbisioides (Coatbuttons)).